Here is a 71-residue protein sequence, read N- to C-terminus: UPF0352 protein Spea_1764 (71 aa).

This sequence belongs to the UPF0352 family.

The sequence is that of UPF0352 protein Spea_1764 from Shewanella pealeana (strain ATCC 700345 / ANG-SQ1).